Consider the following 59-residue polypeptide: Single-pass membrane and coiled-coil domain-containing protein 4 (59 aa).

Residues 1–23 are disordered; that stretch reads MRQLKGKPKKETSKDKKERKQAM. A compositionally biased stretch (basic and acidic residues) spans 9-22; sequence KKETSKDKKERKQA. A coiled-coil region spans residues 9 to 31; the sequence is KKETSKDKKERKQAMQEARQQIT. Residues 32–52 form a helical membrane-spanning segment; it reads TVVLPTLAVVVLLIVVFVYVA.

It belongs to the SMCO4 family.

Its subcellular location is the membrane. The sequence is that of Single-pass membrane and coiled-coil domain-containing protein 4 (SMCO4) from Homo sapiens (Human).